A 184-amino-acid chain; its full sequence is NADH-quinone oxidoreductase subunit B (184 aa).

Residues Cys-37, Cys-38, Cys-103, and Cys-132 each coordinate [4Fe-4S] cluster.

The protein belongs to the complex I 20 kDa subunit family. As to quaternary structure, NDH-1 is composed of 14 different subunits. Subunits NuoB, C, D, E, F, and G constitute the peripheral sector of the complex. It depends on [4Fe-4S] cluster as a cofactor.

It localises to the cell membrane. The enzyme catalyses a quinone + NADH + 5 H(+)(in) = a quinol + NAD(+) + 4 H(+)(out). NDH-1 shuttles electrons from NADH, via FMN and iron-sulfur (Fe-S) centers, to quinones in the respiratory chain. The immediate electron acceptor for the enzyme in this species is believed to be a menaquinone. Couples the redox reaction to proton translocation (for every two electrons transferred, four hydrogen ions are translocated across the cytoplasmic membrane), and thus conserves the redox energy in a proton gradient. The sequence is that of NADH-quinone oxidoreductase subunit B from Mycobacteroides abscessus (strain ATCC 19977 / DSM 44196 / CCUG 20993 / CIP 104536 / JCM 13569 / NCTC 13031 / TMC 1543 / L948) (Mycobacterium abscessus).